Consider the following 427-residue polypeptide: Branched-chain-amino-acid aminotransferase, mitochondrial (427 aa).

The transit peptide at 1–47 (MSLMFLRRAGNIKGRNIRFALQRGSVGYSQQSSEACKNFLNTTQLRT) directs the protein to the mitochondrion. The residue at position 256 (Lys256) is an N6-(pyridoxal phosphate)lysine.

The protein belongs to the class-IV pyridoxal-phosphate-dependent aminotransferase family. Requires pyridoxal 5'-phosphate as cofactor.

The protein localises to the mitochondrion. It localises to the nucleus. It is found in the cytoplasm. It carries out the reaction L-leucine + 2-oxoglutarate = 4-methyl-2-oxopentanoate + L-glutamate. It catalyses the reaction L-isoleucine + 2-oxoglutarate = (S)-3-methyl-2-oxopentanoate + L-glutamate. The catalysed reaction is L-valine + 2-oxoglutarate = 3-methyl-2-oxobutanoate + L-glutamate. Functionally, catalyzes the first reaction in the catabolism of the essential branched chain amino acids leucine, isoleucine, and valine. The polypeptide is Branched-chain-amino-acid aminotransferase, mitochondrial (eca39) (Schizosaccharomyces pombe (strain 972 / ATCC 24843) (Fission yeast)).